A 254-amino-acid polypeptide reads, in one-letter code: Nickel import ATP-binding protein NikD (254 aa).

The ABC transporter domain occupies proline 2–valine 241. Glycine 36 to serine 43 provides a ligand contact to ATP.

Belongs to the ABC transporter superfamily. Nickel importer (TC 3.A.1.5.3) family. In terms of assembly, the complex is composed of two ATP-binding proteins (NikD and NikE), two transmembrane proteins (NikB and NikC) and a solute-binding protein (NikA).

The protein resides in the cell inner membrane. It carries out the reaction Ni(2+)(out) + ATP + H2O = Ni(2+)(in) + ADP + phosphate + H(+). Functionally, part of the ABC transporter complex NikABCDE involved in nickel import. Responsible for energy coupling to the transport system. In Escherichia coli (strain K12), this protein is Nickel import ATP-binding protein NikD.